The primary structure comprises 431 residues: MHVRSLRAAAPHSFVALWAPLFLLRSALADFSLDNEVHSSFIHRRLRSQERREMQREILSILGLPHRPRPHLQGKHNSAPMFMLDLYNAMAVEEGGGPGGQGFSYPYKAVFSTQGPPLASLQDSHFLTDADMVMSFVNLVEHDKEFFHPRYHHREFRFDLSKIPEGEAVTAAEFRIYKDYIRERFDNETFRISVYQVLQEHLGRESDLFLLDSRTLWASEEGWLVFDITATSNHWVVNPRHNLGLQLSVETLDGQSINPKLAGLIGRHGPQNKQPFMVAFFKATEVHFRSIRSTGSKQRSQNRSKTPKNQEALRMANVAENSSSDQRQACKKHELYVSFRDLGWQDWIIAPEGYAAYYCEGECAFPLNSYMNATNHAIVQTLVHFINPETVPKPCCAPTQLNAISVLYFDDSSNVILKKYRNMVVRACGCH.

An N-terminal signal peptide occupies residues 1–29 (MHVRSLRAAAPHSFVALWAPLFLLRSALA). Residues 30-292 (DFSLDNEVHS…ATEVHFRSIR (263 aa)) constitute a propeptide that is removed on maturation. N-linked (GlcNAc...) asparagine glycans are attached at residues N187, N302, N321, and N372. A disordered region spans residues 291 to 311 (IRSTGSKQRSQNRSKTPKNQE). 3 cysteine pairs are disulfide-bonded: C330-C396, C359-C428, and C363-C430.

It belongs to the TGF-beta family. As to quaternary structure, homodimer; disulfide-linked. Interacts with SOSTDC1. Interacts with TWSG1. Interacts with FBN1 (via N-terminal domain) and FBN2. Interacts with type I receptor ACVR1. Interacts with type II receptor ACVR2A. Interacts with NOG; this interaction inhibits canonical BMP signaling. Interacts with SCUBE3. Interacts with ERFE; the interaction inhibits BMP-induced transcription of HAMP. Interacts with TGFBR3. Several N-termini starting at positions 293, 300, 315 and 316 have been identified by direct sequencing resulting in secretion of different mature forms. In terms of tissue distribution, expressed in the kidney and bladder. Lower levels seen in the brain.

Its subcellular location is the secreted. In terms of biological role, growth factor of the TGF-beta superfamily that plays important role in various biological processes, including embryogenesis, hematopoiesis, neurogenesis and skeletal morphogenesis. Initiates the canonical BMP signaling cascade by associating with type I receptor ACVR1 and type II receptor ACVR2A. Once all three components are bound together in a complex at the cell surface, ACVR2A phosphorylates and activates ACVR1. In turn, ACVR1 propagates signal by phosphorylating SMAD1/5/8 that travel to the nucleus and act as activators and repressors of transcription of target genes. For specific functions such as growth cone collapse in developing spinal neurons and chemotaxis of monocytes, also uses BMPR2 as type II receptor. Can also signal through non-canonical pathways such as P38 MAP kinase signaling cascade that promotes brown adipocyte differentiation through activation of target genes, including members of the SOX family of transcription factors. Promotes the expression of HAMP, this is repressed by its interaction with ERFE. The protein is Bone morphogenetic protein 7 (BMP7) of Homo sapiens (Human).